Consider the following 374-residue polypeptide: MAKRDYYEVLGVNLNATEAEVKKAFRRLAMKYHPDRNPGDKDAEVKFKEAREAYEVLCDSRKRASYDQFGHAGVEQTFGGAGAGGFGFGDLGDIFGDIFGDIFGGARGGQAREQRGADLAYELVLSLEEAVHGLSRTIKVPTWINCKTCNGSGAKGSSPATCPRCNGSGQMRMQHGFLQVQQTCSVCRGRGQVIKDPCTDCHGQGRQQQTKTLSVKIPPGIDTGDRIRLAGEGEAGLFGAPPGDLYVQVRVKPHPLFHREGNDLHSEVPIDFTTAALGGEMEIPTLDGSVRLTIPPETQGGKQFRLRGKGVKALRSGAVGDLICHIVVETPVKLSPEQKDYLKQFAELLKKDEKNHSPRTRNWFDSVKDFFTSK.

Positions 5–70 (DYYEVLGVNL…RKRASYDQFG (66 aa)) constitute a J domain. The segment at 133-210 (GLSRTIKVPT…CHGQGRQQQT (78 aa)) adopts a CR-type zinc-finger fold. The Zn(2+) site is built by cysteine 146, cysteine 149, cysteine 162, cysteine 165, cysteine 184, cysteine 187, cysteine 198, and cysteine 201. 4 CXXCXGXG motif repeats span residues 146–153 (CKTCNGSG), 162–169 (CPRCNGSG), 184–191 (CSVCRGRG), and 198–205 (CTDCHGQG).

It belongs to the DnaJ family. As to quaternary structure, homodimer. The cofactor is Zn(2+).

The protein localises to the cytoplasm. Functionally, participates actively in the response to hyperosmotic and heat shock by preventing the aggregation of stress-denatured proteins and by disaggregating proteins, also in an autonomous, DnaK-independent fashion. Unfolded proteins bind initially to DnaJ; upon interaction with the DnaJ-bound protein, DnaK hydrolyzes its bound ATP, resulting in the formation of a stable complex. GrpE releases ADP from DnaK; ATP binding to DnaK triggers the release of the substrate protein, thus completing the reaction cycle. Several rounds of ATP-dependent interactions between DnaJ, DnaK and GrpE are required for fully efficient folding. Also involved, together with DnaK and GrpE, in the DNA replication of plasmids through activation of initiation proteins. In Coxiella burnetii (strain RSA 493 / Nine Mile phase I), this protein is Chaperone protein DnaJ.